We begin with the raw amino-acid sequence, 37 residues long: Lambda-hexatoxin-Hf1a (37 aa).

Disulfide bonds link Cys-4–Cys-18, Cys-11–Cys-23, Cys-14–Cys-15, and Cys-17–Cys-34.

This sequence belongs to the neurotoxin 11 (kappa toxin) family. As to expression, expressed by the venom gland.

Its subcellular location is the secreted. Its function is as follows. This excitatory toxin inhibits insect calcium-activated potassium (KCa) channels (Slo-type). In Hadronyche formidabilis (Northern tree funnel-web spider), this protein is Lambda-hexatoxin-Hf1a.